The sequence spans 343 residues: TATA box-binding protein-like 2 (343 aa).

Residues 71–152 (PDEVTQENKD…SDSLSLASIT (82 aa)) form a disordered region. Over residues 76–90 (QENKDQPVISKHETE) the composition is skewed to basic and acidic residues. Low complexity predominate over residues 94 to 127 (ESQSPQSRLPSPSEQDVGLGLNSSSLSNSHSQLH). Over residues 143–152 (SDSLSLASIT) the composition is skewed to polar residues.

Belongs to the TBP family. Interacts with TAF3. As to expression, ubiquitously expressed in all tissues examined with highest levels in heart, lung, ovary, spleen and testes.

The protein resides in the cytoplasm. It localises to the nucleus. Functionally, transcription factor required in complex with TAF3 for the differentiation of myoblasts into myocytes. The complex replaces TFIID at specific promoters at an early stage in the differentiation process. This chain is TATA box-binding protein-like 2, found in Homo sapiens (Human).